We begin with the raw amino-acid sequence, 144 residues long: L-fucose mutarotase (144 aa).

The active-site Proton donor is His22. Substrate contacts are provided by residues Asp30, Arg109, and 131–133 (YGN).

It belongs to the RbsD / FucU family. FucU mutarotase subfamily. As to quaternary structure, homodecamer.

It localises to the cytoplasm. The catalysed reaction is alpha-L-fucose = beta-L-fucose. The protein operates within carbohydrate metabolism; L-fucose metabolism. Functionally, involved in the anomeric conversion of L-fucose. The sequence is that of L-fucose mutarotase from Actinobacillus pleuropneumoniae serotype 5b (strain L20).